We begin with the raw amino-acid sequence, 262 residues long: tRNA pseudouridine synthase A (262 aa).

D51 acts as the Nucleophile in catalysis. Position 109 (Y109) interacts with substrate.

It belongs to the tRNA pseudouridine synthase TruA family. In terms of assembly, homodimer.

The catalysed reaction is uridine(38/39/40) in tRNA = pseudouridine(38/39/40) in tRNA. Functionally, formation of pseudouridine at positions 38, 39 and 40 in the anticodon stem and loop of transfer RNAs. The sequence is that of tRNA pseudouridine synthase A from Actinobacillus pleuropneumoniae serotype 7 (strain AP76).